The primary structure comprises 306 residues: Ribosomal protein L11 methyltransferase (306 aa).

Thr-154, Gly-179, Asp-201, and Asn-242 together coordinate S-adenosyl-L-methionine.

Belongs to the methyltransferase superfamily. PrmA family.

It is found in the cytoplasm. It carries out the reaction L-lysyl-[protein] + 3 S-adenosyl-L-methionine = N(6),N(6),N(6)-trimethyl-L-lysyl-[protein] + 3 S-adenosyl-L-homocysteine + 3 H(+). In terms of biological role, methylates ribosomal protein L11. The chain is Ribosomal protein L11 methyltransferase from Stenotrophomonas maltophilia (strain K279a).